The chain runs to 255 residues: Large ribosomal subunit protein uL4 (255 aa).

This sequence belongs to the universal ribosomal protein uL4 family. Part of the 50S ribosomal subunit.

Its function is as follows. One of the primary rRNA binding proteins, this protein initially binds near the 5'-end of the 23S rRNA. It is important during the early stages of 50S assembly. It makes multiple contacts with different domains of the 23S rRNA in the assembled 50S subunit and ribosome. Forms part of the polypeptide exit tunnel. The sequence is that of Large ribosomal subunit protein uL4 from Thermoplasma volcanium (strain ATCC 51530 / DSM 4299 / JCM 9571 / NBRC 15438 / GSS1).